Reading from the N-terminus, the 133-residue chain is MGMAQSSSSSSRPSDSEQLEEPSKPVMALDKAKEIVASSPVVVFSKTYCPFCARVKRLLAELAASYKAVELDVESDGSELQSALADWTGQRTVPCVFIKGKHIGGCDDTMAMHKGGNLVPLLTEAGAIATPSL.

Positions 1–13 (MGMAQSSSSSSRP) are enriched in low complexity. The tract at residues 1-25 (MGMAQSSSSSSRPSDSEQLEEPSKP) is disordered. The N-terminal 27 residues, 1-27 (MGMAQSSSSSSRPSDSEQLEEPSKPVM), are a transit peptide targeting the chloroplast. Residues 29–129 (LDKAKEIVAS…PLLTEAGAIA (101 aa)) form the Glutaredoxin domain. A disulfide bond links cysteine 49 and cysteine 52.

This sequence belongs to the glutaredoxin family. CPYC subfamily.

The protein localises to the plastid. The protein resides in the chloroplast. Has a glutathione-disulfide oxidoreductase activity in the presence of NADPH and glutathione reductase. Reduces low molecular weight disulfides and proteins. This is Glutaredoxin-C4, chloroplastic (GRXC4) from Oryza sativa subsp. japonica (Rice).